Consider the following 134-residue polypeptide: Small ribosomal subunit protein uS8c (134 aa).

It belongs to the universal ribosomal protein uS8 family. As to quaternary structure, part of the 30S ribosomal subunit.

It is found in the plastid. In terms of biological role, one of the primary rRNA binding proteins, it binds directly to 16S rRNA central domain where it helps coordinate assembly of the platform of the 30S subunit. The sequence is that of Small ribosomal subunit protein uS8c (rps8) from Epifagus virginiana (Beechdrops).